The following is a 373-amino-acid chain: Glutamine synthetase (373 aa).

The GS beta-grasp domain maps to 24 to 106 (EKVQAMYIWI…VLCEVFKYNR (83 aa)). One can recognise a GS catalytic domain in the interval 113–373 (LRHTCRRIMD…TGDEPFEYKN (261 aa)). E134 contributes to the ATP binding site. 4 residues coordinate Mn(2+): E134, E136, E196, and E203. 203 to 208 (EFQVGP) provides a ligand contact to ATP. An L-glutamate-binding site is contributed by 246-247 (NW). Position 253 (H253) interacts with Mn(2+). ATP is bound by residues 255–257 (NFS), R319, and R324. Residue R319 participates in L-glutamate binding. 336–338 (YFE) is a binding site for ADP. A Mn(2+)-binding site is contributed by E338. R340 lines the L-glutamate pocket.

This sequence belongs to the glutamine synthetase family. As to quaternary structure, homooctamer and homotetramer. It depends on biotin as a cofactor. Mg(2+) is required as a cofactor. The cofactor is Mn(2+). In terms of tissue distribution, expressed in retina, brain and liver. Little or no detectable expression in breast muscle, pancreas and spleen.

The protein localises to the cytoplasm. It localises to the mitochondrion. The catalysed reaction is L-glutamate + NH4(+) + ATP = L-glutamine + ADP + phosphate + H(+). It carries out the reaction L-glutamate + H(+) = 4-aminobutanoate + CO2. Its activity is regulated as follows. Glutamate to glutamine ratio influences catalytic activity. At glutamate to glutamine ratios greater than 4, decarboxylase activity ceases. In the presence of manganese, synthetase activity is limited to concentrations between 10 mM and 20 mM, whereas decarboxylase activity is not affected. Both catalytic activities are inhibited by avidin. Its function is as follows. Glutamine synthetase that catalyzes the ATP-dependent conversion of glutamate and ammonia to glutamine. When expressed in liver, it may be involved in detoxifying intramitochondrially generated ammonia. Also acts as glutamate decarboxylase by catalyzing the production of 4-aminobutanoate (gamma-aminobutyric acid, GABA) in a pyridoxal phosphate-independent manner. The polypeptide is Glutamine synthetase (Gallus gallus (Chicken)).